A 371-amino-acid polypeptide reads, in one-letter code: Cytochrome b (371 aa).

4 helical membrane-spanning segments follow: residues 25–45, 69–90, 105–125, and 170–190; these read FGSM…FLAI, WIMQ…YIHI, WLSG…GYVL, and FFAL…IHII. His-75 and His-89 together coordinate heme b. The heme b site is built by His-174 and His-188. Residue His-193 coordinates a ubiquinone. 4 helical membrane-spanning segments follow: residues 218–238, 280–300, 312–332, and 339–358; these read YKDT…LSFS, LGGT…PFTH, LAQM…WTAS, and FIII…IMNP.

The protein belongs to the cytochrome b family. In terms of assembly, the cytochrome bc1 complex contains 3 respiratory subunits (MT-CYB, CYC1 and UQCRFS1), 2 core proteins (UQCRC1 and UQCRC2) and probably 6 low-molecular weight proteins. The cofactor is heme b.

It localises to the mitochondrion inner membrane. Functionally, component of the ubiquinol-cytochrome c reductase complex (complex III or cytochrome b-c1 complex) that is part of the mitochondrial respiratory chain. The b-c1 complex mediates electron transfer from ubiquinol to cytochrome c. Contributes to the generation of a proton gradient across the mitochondrial membrane that is then used for ATP synthesis. This chain is Cytochrome b (MT-CYB), found in Sinomicrurus kelloggi (Kellogg's coral snake).